Consider the following 1055-residue polypeptide: Elongation factor 3 (1055 aa).

Val45 contacts ADP. HEAT repeat units follow at residues 45 to 86 (VEFF…NGAA), 96 to 133 (SAENTPFPALLEAFADKVAAVKTAAIAAVKAIVQSMNP), 135 to 172 (ASFVLLPALLNLIRTSGKWQIKAGSLEILQQLITSAPY), 175 to 213 (GEAMPDLVPVLAGAVWDTKSDVKKAAKATLEKAVSLVEN), 217 to 255 (EKFVPALVKSLLNPIEEVPKTISLLSATTFVSEVTAPTI), 257 to 290 (LIAPLLIRGLDERPTATKRKVCVIADNMSKLVDS), and 295 to 337 (RPFL…VPVE). 2 consecutive ABC transporter domains span residues 447–659 (CNIE…SYYQ) and 687–1004 (LKMR…KKAG). 4 residues coordinate ADP: Asn723, Glu933, Asn936, and His962. 2 disordered regions span residues 987 to 1006 (HNWVEGQGSGERIDKKAGDD) and 1024 to 1055 (EKKLSAADKRKAKKDRMARRKRGEEVFSDEEL). A compositionally biased stretch (basic residues) spans 1033 to 1044 (RKAKKDRMARRK).

This sequence belongs to the ABC transporter superfamily. ABCF family. EF3 subfamily. As to quaternary structure, associates with ribosomes.

It localises to the cytoplasm. It is found in the cytosol. The catalysed reaction is ATP + H2O = ADP + phosphate + H(+). The protein operates within protein biosynthesis; polypeptide chain elongation. Functionally, ribosome-dependent ATPase that functions in cytoplasmic translation elongation. Required for the ATP-dependent release of deacylated tRNA from the ribosomal E-site during protein biosynthesis. Stimulates the eEF1A-dependent binding of aminoacyl-tRNA to the ribosomal A-site, which has reduced affinity for tRNA as long as the E-site is occupied. Assists translation termination by stimulating the release of nascent protein from the ribosome by release factors. Appears to target calcium-channel protein CCH1 to the plasma membrane. The polypeptide is Elongation factor 3 (Cryptococcus neoformans var. neoformans serotype D (strain JEC21 / ATCC MYA-565) (Filobasidiella neoformans)).